The chain runs to 72 residues: Translation initiation factor IF-1 (72 aa).

The region spanning 1-72 (MSKDDVIEMQ…TRGRITWRAK (72 aa)) is the S1-like domain.

It belongs to the IF-1 family. Component of the 30S ribosomal translation pre-initiation complex which assembles on the 30S ribosome in the order IF-2 and IF-3, IF-1 and N-formylmethionyl-tRNA(fMet); mRNA recruitment can occur at any time during PIC assembly.

It localises to the cytoplasm. Functionally, one of the essential components for the initiation of protein synthesis. Stabilizes the binding of IF-2 and IF-3 on the 30S subunit to which N-formylmethionyl-tRNA(fMet) subsequently binds. Helps modulate mRNA selection, yielding the 30S pre-initiation complex (PIC). Upon addition of the 50S ribosomal subunit IF-1, IF-2 and IF-3 are released leaving the mature 70S translation initiation complex. The protein is Translation initiation factor IF-1 of Clostridium beijerinckii (strain ATCC 51743 / NCIMB 8052) (Clostridium acetobutylicum).